The primary structure comprises 379 residues: Flap endonuclease 1 (379 aa).

Positions 1–105 (MGIKGLTKLL…QELAKRYSKR (105 aa)) are N-domain. Residue D34 coordinates Mg(2+). Residue R71 participates in DNA binding. Mg(2+)-binding residues include D87, E159, E161, D180, and D182. Positions 123–254 (AIEKLSKRTV…QTALKLIRQH (132 aa)) are I-domain. E159 is a binding site for DNA. Residues G232 and D234 each coordinate DNA. Position 234 (D234) interacts with Mg(2+). The segment at 331–379 (AKNKSSQGRLESFFKPTATTSAPLKRKETSDKTSKAAANKKTKAGGKKK) is disordered. The segment at 336 to 344 (SQGRLESFF) is interaction with PCNA. Residues 355–364 (KRKETSDKTS) are compositionally biased toward basic and acidic residues. Residues 368–379 (ANKKTKAGGKKK) are compositionally biased toward basic residues.

Belongs to the XPG/RAD2 endonuclease family. FEN1 subfamily. As to quaternary structure, interacts with PCNA. Three molecules of FEN1 bind to one PCNA trimer with each molecule binding to one PCNA monomer. PCNA stimulates the nuclease activity without altering cleavage specificity. The cofactor is Mg(2+). In terms of processing, phosphorylated. Phosphorylation upon DNA damage induces relocalization to the nuclear plasma.

It localises to the nucleus. The protein localises to the nucleolus. The protein resides in the nucleoplasm. Its subcellular location is the mitochondrion. Its function is as follows. Structure-specific nuclease with 5'-flap endonuclease and 5'-3' exonuclease activities involved in DNA replication and repair. During DNA replication, cleaves the 5'-overhanging flap structure that is generated by displacement synthesis when DNA polymerase encounters the 5'-end of a downstream Okazaki fragment. It enters the flap from the 5'-end and then tracks to cleave the flap base, leaving a nick for ligation. Also involved in the long patch base excision repair (LP-BER) pathway, by cleaving within the apurinic/apyrimidinic (AP) site-terminated flap. Acts as a genome stabilization factor that prevents flaps from equilibrating into structures that lead to duplications and deletions. Also possesses 5'-3' exonuclease activity on nicked or gapped double-stranded DNA, and exhibits RNase H activity. Also involved in replication and repair of rDNA and in repairing mitochondrial DNA. The protein is Flap endonuclease 1 of Zea mays (Maize).